A 4083-amino-acid polypeptide reads, in one-letter code: Dynein heavy chain, cytoplasmic (4083 aa).

The segment at 1-1745 (MTDDQVAQAL…TIEQSCVSFC (1745 aa)) is stem. 3 coiled-coil regions span residues 127–166 (DAVVSTNSNLEAKQESINSARRKIKDLSLSLQSLQQFIEV), 381–402 (INQWEALLKEFTSLIRELMRKR), and 801–821 (KLDLQNLEVLINKIQLLVDQA). AAA stretches follow at residues 1746 to 1967 (YGFE…VLRN), 2026 to 2265 (SYLA…YKAD), 2373 to 2622 (SLES…WVRG), and 2716 to 2980 (TFAE…GNSQ). ATP-binding positions include 1784-1791 (GPAGTGKT), 2064-2071 (GDAGTGKT), 2412-2419 (GPPGSGKT), and 2754-2761 (GPNYSGKT). The segment at 2987-3294 (LTSLRRFQSL…RSIKLMESLT (308 aa)) is stalk. Coiled-coil stretches lie at residues 3015–3085 (LEKL…NERR), 3223–3302 (LKEE…RWIK), and 3527–3607 (LEKE…VEDL). AAA stretches follow at residues 3364–3592 (MVNP…EIAK) and 3748–3952 (LKSL…FLDH).

This sequence belongs to the dynein heavy chain family. In terms of assembly, consists of at least two heavy chains and a number of intermediate and light chains.

The protein resides in the cytoplasm. The protein localises to the cytoskeleton. Cytoplasmic dynein acts as a motor for the intracellular retrograde motility of vesicles and organelles along microtubules. Dynein has ATPase activity; the force-producing power stroke is thought to occur on release of ADP. Required to maintain uniform nuclear distribution in hyphae. May play an important role in the proper orientation of the mitotic spindle into the budding daughter cell yeast. Probably required for normal progression of the cell cycle. In Eremothecium gossypii (strain ATCC 10895 / CBS 109.51 / FGSC 9923 / NRRL Y-1056) (Yeast), this protein is Dynein heavy chain, cytoplasmic (DYN1).